The following is a 321-amino-acid chain: G-protein coupled receptor aex-2 (321 aa).

Residues methionine 1–alanine 24 lie on the Extracellular side of the membrane. 3 N-linked (GlcNAc...) asparagine glycosylation sites follow: asparagine 2, asparagine 9, and asparagine 17. The chain crosses the membrane as a helical span at residues phenylalanine 25–leucine 45. Residues threonine 46–arginine 55 lie on the Cytoplasmic side of the membrane. Residues glutamine 56–threonine 76 traverse the membrane as a helical segment. Topologically, residues arginine 77–proline 90 are extracellular. A disulfide bridge links cysteine 88 with cysteine 161. A helical transmembrane segment spans residues tyrosine 91 to valine 111. At aspartate 112–leucine 132 the chain is on the cytoplasmic side. Residues leucine 133 to phenylalanine 153 traverse the membrane as a helical segment. Topologically, residues leucine 154 to proline 175 are extracellular. A helical transmembrane segment spans residues isoleucine 176–alanine 196. Residues histidine 197–threonine 221 are Cytoplasmic-facing. A helical transmembrane segment spans residues leucine 222–glycine 242. Residues glutamate 243–alanine 254 are Extracellular-facing. Residues threonine 255–tryptophan 275 form a helical membrane-spanning segment. The Cytoplasmic segment spans residues threonine 276 to methionine 321.

This sequence belongs to the G-protein coupled receptor 1 family. As to expression, expressed in the intestinal muscle, anal depressor, AVL and DVB GABAergic neurons, enteric muscles, the nerve ring, the ventral nerve cord and head mesodermal cells.

It is found in the cell membrane. Its subcellular location is the cell projection. It localises to the cilium. In terms of biological role, G-protein coupled receptor for the nlp-40 neuropeptide. The activity of this receptor is mediated by G proteins which activate adenylyl cyclase. Plays a role in the defecation motor program, which is a coordinated series of three muscle contractions that occurs every 45 seconds. Specifically, acts in GABAergic neurons, such as AVL and DVB, to control the expulsion step of defecation. Required for fatty acid uptake and metabolism by intestinal cells and therefore regulates the levels of triglycerides in the intestine. This chain is G-protein coupled receptor aex-2, found in Caenorhabditis elegans.